Reading from the N-terminus, the 152-residue chain is Peptide deformylase (152 aa).

2 residues coordinate Fe cation: cysteine 88 and histidine 130. Glutamate 131 is an active-site residue. Residue histidine 134 participates in Fe cation binding.

It belongs to the polypeptide deformylase family. Fe(2+) serves as cofactor.

The enzyme catalyses N-terminal N-formyl-L-methionyl-[peptide] + H2O = N-terminal L-methionyl-[peptide] + formate. Removes the formyl group from the N-terminal Met of newly synthesized proteins. Requires at least a dipeptide for an efficient rate of reaction. N-terminal L-methionine is a prerequisite for activity but the enzyme has broad specificity at other positions. The chain is Peptide deformylase from Carboxydothermus hydrogenoformans (strain ATCC BAA-161 / DSM 6008 / Z-2901).